Reading from the N-terminus, the 601-residue chain is DNA ligase (601 aa).

Aspartate 258 provides a ligand contact to ATP. The N6-AMP-lysine intermediate role is filled by lysine 260. Positions 265, 280, 310, 350, 427, and 433 each coordinate ATP. The tract at residues 568-601 is disordered; that stretch reads DKSPEDATTTDEILEMYNKQPKKKIESPPIDESV.

This sequence belongs to the ATP-dependent DNA ligase family. Requires Mg(2+) as cofactor.

It catalyses the reaction ATP + (deoxyribonucleotide)n-3'-hydroxyl + 5'-phospho-(deoxyribonucleotide)m = (deoxyribonucleotide)n+m + AMP + diphosphate.. Functionally, DNA ligase that seals nicks in double-stranded DNA during DNA replication, DNA recombination and DNA repair. This Saccharolobus islandicus (strain Y.N.15.51 / Yellowstone #2) (Sulfolobus islandicus) protein is DNA ligase.